The chain runs to 266 residues: Apolipoprotein A-I (266 aa).

Residues 1-18 form the signal peptide; it reads MKAVVLTLAVLFLTGSQA. 2 tandem repeats follow at residues 67 to 88 and 89 to 110. Residues 67-266 are 10 X approximate tandem repeats; the sequence is LKLLDNWDTL…DEATKKLNAQ (200 aa). A Methionine sulfoxide modification is found at methionine 109. Residues 111–121 form a 3; half-length repeat; it reads KDLEEVKKKVQ. 5 consecutive repeat copies span residues 122–143, 144–165, 166–187, 188–209, and 210–231. Residues 232–242 form a 9; half-length repeat; that stretch reads PALEDLRQGLL. Repeat 10 spans residues 243–266; the sequence is PVLESFRTSLLAAVDEATKKLNAQ.

The protein belongs to the apolipoprotein A1/A4/E family. As to quaternary structure, homodimer. Interacts with APOA1BP and CLU. Component of a sperm activating protein complex (SPAP), consisting of APOA1, an immunoglobulin heavy chain, an immunoglobulin light chain and albumin. Interacts with NDRG1. Interacts with SCGB3A2. Interacts with NAXE and YJEFN3. In terms of processing, glycosylated. Palmitoylated. Post-translationally, phosphorylation sites are present in the extracellular medium.

It localises to the secreted. Functionally, participates in the reverse transport of cholesterol from tissues to the liver for excretion by promoting cholesterol efflux from tissues and by acting as a cofactor for the lecithin cholesterol acyltransferase (LCAT). As part of the SPAP complex, activates spermatozoa motility. This Odobenus rosmarus divergens (Pacific walrus) protein is Apolipoprotein A-I (APOA1).